A 500-amino-acid polypeptide reads, in one-letter code: Protein farnesyltransferase subunit beta (500 aa).

The segment at 117–140 is disordered; it reads LQNDDNNGNNNNRENNQNGGGFGG. Residues 119-133 are compositionally biased toward low complexity; that stretch reads NDDNNGNNNNRENNQ. 5 PFTB repeats span residues 121–162, 172–213, 220–261, 268–309, and 343–384; these read DNNG…YVIG, REAM…SMLN, ERGV…SILN, MNSL…IIIQ, and QEYV…SLSQ. Residues 246 to 249 and 288 to 291 each bind (2E,6E)-farnesyl diphosphate; these read HGGY and RTNK. Residues aspartate 294 and cysteine 296 each coordinate Zn(2+). 297–300 contributes to the (2E,6E)-farnesyl diphosphate binding site; sequence YSYW. Zn(2+) is bound at residue histidine 372. Residues 402–451 are disordered; it reads FEQPSPPINKKSTNVFTISNNNNNNNNKNNNSDDNNNNSNNNNNNSENQL. Over residues 420 to 449 the composition is skewed to low complexity; that stretch reads SNNNNNNNNKNNNSDDNNNNSNNNNNNSEN.

The protein belongs to the protein prenyltransferase subunit beta family. As to quaternary structure, heterodimer of fntA and fntB (farnesyltransferase). Heterodimer of an alpha and a beta subunit. Zn(2+) serves as cofactor.

It carries out the reaction L-cysteinyl-[protein] + (2E,6E)-farnesyl diphosphate = S-(2E,6E)-farnesyl-L-cysteinyl-[protein] + diphosphate. Catalyzes the transfer of a farnesyl moiety from farnesyl diphosphate to a cysteine at the fourth position from the C-terminus of several proteins. The beta subunit is responsible for peptide-binding. This chain is Protein farnesyltransferase subunit beta (fntB), found in Dictyostelium discoideum (Social amoeba).